A 776-amino-acid polypeptide reads, in one-letter code: MGKIVRISGPVVVAEDIENAKMYDVVKVGEMGLIGEIIRIEGNRSTIQVYEDTAGIRPDEKVENTMRPLSVELGPGLLKSIYDGIQRPLDVIKETSGDFIARGLNPPPLDRKKEWDFVPAVKKNDIVYPGQVIGTVQETSLITHRIIVPDGVSGKIKSIYEGKRTVEDVVCTISTEHGDVDVNLMTTWPVRKARRVVRKLPPEIPLVTGQRVIDALFPVAKGGTAAVPGPFGSGKCVSGETPVYLADGKTIKIKDLYSSERKKEDNIVEAGSGEEIIHLKDPIQIYSYVDGTIVRSRSRLLYKGKSSYLVRIETIGGRSVSVTPVHKLFVLTEKGIEEVMASNLKVGDMIAAVAESESEARDCGMSEECVMEAEVYTSLEATFDRVKSIAYEKGDFDVYDLSVPEYGRNFIGGEGLLVLHNTVIQHQLAKWSDANIVVYIGCGERGNEMTEILTTFPELKDPVSGQPLMDRTVLIANTSNMPVAAREASIYTGITIAEYYRDMGYDVALMADSTSRWAEALREISGRLEEMPGEEGYPAYLGRRISEFYERSGRARLVSPEDRFGSITVIGAVSPPGGDISEPVSQNTLRVTRVFWALDASLANRRHFPSINWLNSYSLYTEDLRHWYDENVAKDWGSLRSQAMDILQRESELQEVAQLVGYDAMPEKEKSILDVARIIREDFLQQSAFDEIDSYCSLRKQYLMLKAIMELNSYQSMAIDHGVTMDNLSSLPVREKLSRMKIVPEDQVESYYSSIIKEIHKEYTSFIGEKNAEANI.

It belongs to the ATPase alpha/beta chains family. Has multiple subunits with at least A(3), B(3), C, D, E, F, H, I and proteolipid K(x). This protein undergoes a protein self splicing that involves a post-translational excision of the VDE intervening region (intein) followed by peptide ligation.

It localises to the cell membrane. The enzyme catalyses ATP + H2O + 4 H(+)(in) = ADP + phosphate + 5 H(+)(out). Component of the A-type ATP synthase that produces ATP from ADP in the presence of a proton gradient across the membrane. The A chain is the catalytic subunit. This Thermoplasma volcanium (strain ATCC 51530 / DSM 4299 / JCM 9571 / NBRC 15438 / GSS1) protein is A-type ATP synthase subunit A.